We begin with the raw amino-acid sequence, 212 residues long: Pyrrolidone-carboxylate peptidase (212 aa).

Active-site residues include Glu-78, Cys-141, and His-165.

Belongs to the peptidase C15 family. Homotetramer.

The protein resides in the cytoplasm. The catalysed reaction is Release of an N-terminal pyroglutamyl group from a polypeptide, the second amino acid generally not being Pro.. Removes 5-oxoproline from various penultimate amino acid residues except L-proline. The polypeptide is Pyrrolidone-carboxylate peptidase (Staphylococcus aureus (strain NCTC 8325 / PS 47)).